We begin with the raw amino-acid sequence, 305 residues long: UDP-3-O-acyl-N-acetylglucosamine deacetylase (305 aa).

Histidine 78, histidine 237, and aspartate 241 together coordinate Zn(2+). The active-site Proton donor is the histidine 264.

This sequence belongs to the LpxC family. Zn(2+) is required as a cofactor.

It catalyses the reaction a UDP-3-O-[(3R)-3-hydroxyacyl]-N-acetyl-alpha-D-glucosamine + H2O = a UDP-3-O-[(3R)-3-hydroxyacyl]-alpha-D-glucosamine + acetate. The protein operates within glycolipid biosynthesis; lipid IV(A) biosynthesis; lipid IV(A) from (3R)-3-hydroxytetradecanoyl-[acyl-carrier-protein] and UDP-N-acetyl-alpha-D-glucosamine: step 2/6. Functionally, catalyzes the hydrolysis of UDP-3-O-myristoyl-N-acetylglucosamine to form UDP-3-O-myristoylglucosamine and acetate, the committed step in lipid A biosynthesis. In Paraburkholderia phymatum (strain DSM 17167 / CIP 108236 / LMG 21445 / STM815) (Burkholderia phymatum), this protein is UDP-3-O-acyl-N-acetylglucosamine deacetylase.